The primary structure comprises 176 residues: Ribosome maturation factor RimM (176 aa).

The PRC barrel domain maps to 93–172; it reads KDEFFYFDII…KIQVKNSLDI (80 aa).

Belongs to the RimM family. As to quaternary structure, binds ribosomal protein uS19.

The protein resides in the cytoplasm. Functionally, an accessory protein needed during the final step in the assembly of 30S ribosomal subunit, possibly for assembly of the head region. Essential for efficient processing of 16S rRNA. May be needed both before and after RbfA during the maturation of 16S rRNA. It has affinity for free ribosomal 30S subunits but not for 70S ribosomes. The chain is Ribosome maturation factor RimM from Campylobacter fetus subsp. fetus (strain 82-40).